The following is a 170-amino-acid chain: UPF0260 protein Rpal_2074 (170 aa).

The protein belongs to the UPF0260 family.

This Rhodopseudomonas palustris (strain TIE-1) protein is UPF0260 protein Rpal_2074.